The primary structure comprises 190 residues: MVKGLEKFNELVESFANLPTIGKKTAIRLAYHLCINNQIDGMKLAHNIENAIRFIKPCEQCGALSENELCEICSDEERNKNILCIVESPKDILTLEESQSYNGLYFVLDELNEEKLEKLKQIILKLNISELIFALTHSINSDATIFFIEDKFKGLNLTFSKIAQGIPSGINLENVDLISLNKAMNFRTKI.

Residues C58–C73 form a C4-type zinc finger. A Toprim domain is found at N81–P167.

It belongs to the RecR family.

Its function is as follows. May play a role in DNA repair. It seems to be involved in an RecBC-independent recombinational process of DNA repair. It may act with RecF and RecO. The polypeptide is Recombination protein RecR (Campylobacter jejuni (strain RM1221)).